The sequence spans 284 residues: 2-dehydro-3-deoxyphosphooctonate aldolase (284 aa).

It belongs to the KdsA family.

The protein resides in the cytoplasm. It carries out the reaction D-arabinose 5-phosphate + phosphoenolpyruvate + H2O = 3-deoxy-alpha-D-manno-2-octulosonate-8-phosphate + phosphate. The protein operates within carbohydrate biosynthesis; 3-deoxy-D-manno-octulosonate biosynthesis; 3-deoxy-D-manno-octulosonate from D-ribulose 5-phosphate: step 2/3. It functions in the pathway bacterial outer membrane biogenesis; lipopolysaccharide biosynthesis. This chain is 2-dehydro-3-deoxyphosphooctonate aldolase, found in Photobacterium profundum (strain SS9).